Consider the following 145-residue polypeptide: Large ribosomal subunit protein uL16 (145 aa).

This sequence belongs to the universal ribosomal protein uL16 family. As to quaternary structure, part of the 50S ribosomal subunit.

Binds 23S rRNA and is also seen to make contacts with the A and possibly P site tRNAs. The sequence is that of Large ribosomal subunit protein uL16 from Lactobacillus gasseri (strain ATCC 33323 / DSM 20243 / BCRC 14619 / CIP 102991 / JCM 1131 / KCTC 3163 / NCIMB 11718 / NCTC 13722 / AM63).